Here is a 93-residue protein sequence, read N- to C-terminus: RNA-binding protein Hfq (93 aa).

Residues 11–71 (DVFLNHVRKS…ISTVMPGAPI (61 aa)) enclose the Sm domain.

The protein belongs to the Hfq family. Homohexamer.

RNA chaperone that binds small regulatory RNA (sRNAs) and mRNAs to facilitate mRNA translational regulation in response to envelope stress, environmental stress and changes in metabolite concentrations. Also binds with high specificity to tRNAs. This Granulibacter bethesdensis (strain ATCC BAA-1260 / CGDNIH1) protein is RNA-binding protein Hfq.